Consider the following 395-residue polypeptide: Transcriptional coactivator yorkie (395 aa).

The segment at 73 to 100 (NSFFTPPAPSHSRANSADSTYDAGSQSS) is disordered. Phosphoserine occurs at positions 82, 88, 100, 117, and 145. The segment covering 84 to 100 (SRANSADSTYDAGSQSS) has biased composition (polar residues). 2 disordered regions span residues 129 to 150 (PSPQ…PASL) and 162 to 199 (AAAA…PASS). S146 bears the Phosphoserine; by CDK7 mark. The residue at position 149 (S149) is a Phosphoserine. Positions 162 to 179 (AAAANNPNANPSSQQQPA) are enriched in low complexity. S227 carries the post-translational modification Phosphoserine. A Phosphotyrosine modification is found at Y228. S232 carries the phosphoserine modification. 2 consecutive WW domains span residues 241-274 (GALP…DPRI) and 310-343 (GPLP…DPRM).

Belongs to the YAP1 family. In terms of assembly, interacts (via WW domains) with wts. Interacts (via N-terminus) with sd (via C-terminus) and this interaction enhances the transcriptional activity of sd. The phosphorylated form interacts with 14-3-3epsilon and 14-3-3zeta. Interacts with Ack and ex. Its activity is regulated by multiple phosphorylation events. Phosphorylation at Ser-88, Ser-145 and Ser-227 negatively regulate its activity and restrict its nuclear localization. Wts-mediated phosphorylation at Ser-145 promotes interaction with 14-3-3epsilon and 14-3-3zeta. Phosphorylation at Ser-88 and Ser-227 regulate nuclear localization and activity independent of 14-3-3 association. Phosphorylation at Ser-146 by Cdk7 promotes its stability by preventing ubiquitination by the DCX(DCAF12) complex. In terms of processing, ubiquitinated by the DCX(DCAF12) complex, leading to its degradation. Phosphorylation at Ser-146 by Cdk7 prevents ubiquitination by the DCX(DCAF12) complex.

It is found in the cytoplasm. The protein localises to the nucleus. Transcriptional coactivator which is the critical downstream regulatory target in the Hippo/SWH (Sav/Wts/Hpo) signaling pathway that plays a pivotal role in organ size control and tumor suppression by restricting proliferation and promoting apoptosis. The core of this pathway is composed of a kinase cascade wherein Hippo (Hpo), in complex with its regulatory protein Salvador (Sav), phosphorylates and activates Warts (Wts) in complex with its regulatory protein Mats, which in turn phosphorylates and inactivates the Yorkie (Yki) oncoprotein. The Hippo/SWH signaling pathway inhibits the activity of the transcriptional complex formed by Scalloped (sd) and Yki and the target genes of this pathway include cyclin-E (cycE), diap1 and bantam. Regulates the expression of G1/S-specific CycE and diap1, thereby promoting cell proliferation and inhibiting apoptosis. Required for transcriptional activity of sd in wing imaginal disks. Induces expression of expression of vestigial (vg) in wing and haltere disks and the expression of transcription factor E2f (E2f). The polypeptide is Transcriptional coactivator yorkie (yki) (Drosophila melanogaster (Fruit fly)).